A 69-amino-acid chain; its full sequence is UPF0337 protein RB0906 (69 aa).

Belongs to the UPF0337 (CsbD) family.

This is UPF0337 protein RB0906 from Rhizobium meliloti (strain 1021) (Ensifer meliloti).